A 57-amino-acid chain; its full sequence is Large ribosomal subunit protein bL33 (57 aa).

The protein belongs to the bacterial ribosomal protein bL33 family.

This chain is Large ribosomal subunit protein bL33, found in Shewanella halifaxensis (strain HAW-EB4).